Here is a 418-residue protein sequence, read N- to C-terminus: AP-3 complex subunit mu-1 (418 aa).

Residues 176–417 form the MHD domain; the sequence is NNEAYFDVVE…ITKAGKFQVR (242 aa).

The protein belongs to the adaptor complexes medium subunit family. As to quaternary structure, adaptor protein complex 3 (AP-3) is a heterotetramer composed of two large adaptins (delta-type subunit AP3D1 and beta-type subunit AP3B1 or AP3B2), a medium adaptin (mu-type subunit AP3M1 or AP3M2) and a small adaptin (sigma-type subunit APS1 or AP3S2). Interacts with AGAP1. AP-3 associates with the BLOC-1 complex.

Its subcellular location is the golgi apparatus. It is found in the cytoplasmic vesicle membrane. Its function is as follows. Part of the AP-3 complex, an adaptor-related complex which is not clathrin-associated. The complex is associated with the Golgi region as well as more peripheral structures. It facilitates the budding of vesicles from the Golgi membrane and may be directly involved in trafficking to lysosomes. In concert with the BLOC-1 complex, AP-3 is required to target cargos into vesicles assembled at cell bodies for delivery into neurites and nerve terminals. The polypeptide is AP-3 complex subunit mu-1 (Ap3m1) (Rattus norvegicus (Rat)).